A 474-amino-acid polypeptide reads, in one-letter code: tRNA-2-methylthio-N(6)-dimethylallyladenosine synthase (474 aa).

Positions 3–120 (KKLHIKTWGC…LPEMINSVRG (118 aa)) constitute an MTTase N-terminal domain. The [4Fe-4S] cluster site is built by C12, C49, C83, C157, C161, and C164. The region spanning 143-375 (RAEGPTAFVS…QERINQQAMA (233 aa)) is the Radical SAM core domain. The region spanning 378-441 (RRMLGTVQRI…TNSLRGKIVR (64 aa)) is the TRAM domain.

The protein belongs to the methylthiotransferase family. MiaB subfamily. Monomer. The cofactor is [4Fe-4S] cluster.

The protein resides in the cytoplasm. It catalyses the reaction N(6)-dimethylallyladenosine(37) in tRNA + (sulfur carrier)-SH + AH2 + 2 S-adenosyl-L-methionine = 2-methylsulfanyl-N(6)-dimethylallyladenosine(37) in tRNA + (sulfur carrier)-H + 5'-deoxyadenosine + L-methionine + A + S-adenosyl-L-homocysteine + 2 H(+). Functionally, catalyzes the methylthiolation of N6-(dimethylallyl)adenosine (i(6)A), leading to the formation of 2-methylthio-N6-(dimethylallyl)adenosine (ms(2)i(6)A) at position 37 in tRNAs that read codons beginning with uridine. This is tRNA-2-methylthio-N(6)-dimethylallyladenosine synthase from Klebsiella pneumoniae subsp. pneumoniae (strain ATCC 700721 / MGH 78578).